A 265-amino-acid chain; its full sequence is Homeobox protein CDX-1 (265 aa).

The interval 9 to 153 (KDSPVYPGPA…GGGGSGKTRT (145 aa)) is disordered. A compositionally biased stretch (pro residues) spans 30–42 (YGPPAPPPAPPQY). Positions 73-92 (AAAYGPGPAAPAASPASLAF) are enriched in low complexity. Over residues 93–108 (GPPPDFSPVPAPPGPG) the composition is skewed to pro residues. The segment covering 110–126 (GLLAQPLGGPGTPSSPG) has biased composition (low complexity). A DNA-binding region (homeobox) is located at residues 154-213 (KDKYRVVYTDHQRLELEKEFHYSRYITIRRKSELAANLGLTERQVKIWFQNRRAKERKVN). The interaction with DNA stretch occupies residues 157 to 178 (YRVVYTDHQRLELEKEFHYSRY). The interaction with 5-mCpG DNA stretch occupies residues 196 to 207 (RQVKIWFQNRRA). Basic residues predominate over residues 207 to 217 (AKERKVNKKKQ). The interval 207 to 265 (AKERKVNKKKQQQQQPPQPPMAHDITATPAGPSLGGLCPSNTSLLATSSPMPVKEEFLP) is disordered. The segment covering 245 to 256 (PSNTSLLATSSP) has biased composition (polar residues).

It belongs to the Caudal homeobox family. Intestinal epithelium.

The protein resides in the nucleus. Plays a role in transcriptional regulation. Involved in activated KRAS-mediated transcriptional activation of PRKD1 in colorectal cancer (CRC) cells. Binds to the PRKD1 promoter in colorectal cancer (CRC) cells. Could play a role in the terminal differentiation of the intestine. Binds preferentially to methylated DNA. This is Homeobox protein CDX-1 (CDX1) from Homo sapiens (Human).